A 371-amino-acid chain; its full sequence is Dual-specificity RNA methyltransferase RlmN (371 aa).

The active-site Proton acceptor is the glutamate 92. One can recognise a Radical SAM core domain in the interval 98-337 (EADRATLCVS…VTVRKTRGDD (240 aa)). Cysteines 105 and 342 form a disulfide. Positions 112, 116, and 119 each coordinate [4Fe-4S] cluster. S-adenosyl-L-methionine-binding positions include 166–167 (GE), serine 198, 220–222 (SLH), and asparagine 299. The active-site S-methylcysteine intermediate is cysteine 342.

It belongs to the radical SAM superfamily. RlmN family. Requires [4Fe-4S] cluster as cofactor.

It localises to the cytoplasm. The catalysed reaction is adenosine(2503) in 23S rRNA + 2 reduced [2Fe-2S]-[ferredoxin] + 2 S-adenosyl-L-methionine = 2-methyladenosine(2503) in 23S rRNA + 5'-deoxyadenosine + L-methionine + 2 oxidized [2Fe-2S]-[ferredoxin] + S-adenosyl-L-homocysteine. It catalyses the reaction adenosine(37) in tRNA + 2 reduced [2Fe-2S]-[ferredoxin] + 2 S-adenosyl-L-methionine = 2-methyladenosine(37) in tRNA + 5'-deoxyadenosine + L-methionine + 2 oxidized [2Fe-2S]-[ferredoxin] + S-adenosyl-L-homocysteine. Its function is as follows. Specifically methylates position 2 of adenine 2503 in 23S rRNA and position 2 of adenine 37 in tRNAs. m2A2503 modification seems to play a crucial role in the proofreading step occurring at the peptidyl transferase center and thus would serve to optimize ribosomal fidelity. The protein is Dual-specificity RNA methyltransferase RlmN of Actinobacillus succinogenes (strain ATCC 55618 / DSM 22257 / CCUG 43843 / 130Z).